A 261-amino-acid chain; its full sequence is Putative imidazole glycerol phosphate synthase subunit hisF2 (261 aa).

The active site involves aspartate 138.

This sequence belongs to the HisA/HisF family. Heterodimer of HisH and HisF.

It localises to the cytoplasm. The enzyme catalyses 5-[(5-phospho-1-deoxy-D-ribulos-1-ylimino)methylamino]-1-(5-phospho-beta-D-ribosyl)imidazole-4-carboxamide + L-glutamine = D-erythro-1-(imidazol-4-yl)glycerol 3-phosphate + 5-amino-1-(5-phospho-beta-D-ribosyl)imidazole-4-carboxamide + L-glutamate + H(+). The protein operates within amino-acid biosynthesis; L-histidine biosynthesis; L-histidine from 5-phospho-alpha-D-ribose 1-diphosphate: step 5/9. IGPS catalyzes the conversion of PRFAR and glutamine to IGP, AICAR and glutamate. The HisF subunit catalyzes the cyclization activity that produces IGP and AICAR from PRFAR using the ammonia provided by the HisH subunit. This Prochlorococcus marinus (strain MIT 9313) protein is Putative imidazole glycerol phosphate synthase subunit hisF2 (hisF2).